Here is a 355-residue protein sequence, read N- to C-terminus: uncharacterized protein (355 aa).

One can recognise a J domain in the interval 9–75; sequence DYYDILNISV…KLREKYDKLG (67 aa).

The protein belongs to the DnaJ family.

Its subcellular location is the cytoplasm. This is an uncharacterized protein from Schizosaccharomyces pombe (strain 972 / ATCC 24843) (Fission yeast).